We begin with the raw amino-acid sequence, 466 residues long: Asparagine--tRNA ligase (466 aa).

The protein belongs to the class-II aminoacyl-tRNA synthetase family. In terms of assembly, homodimer.

The protein localises to the cytoplasm. The catalysed reaction is tRNA(Asn) + L-asparagine + ATP = L-asparaginyl-tRNA(Asn) + AMP + diphosphate + H(+). This is Asparagine--tRNA ligase from Shigella dysenteriae serotype 1 (strain Sd197).